A 275-amino-acid polypeptide reads, in one-letter code: MEMO1 family protein Nmar_0215 (275 aa).

This sequence belongs to the MEMO1 family.

The sequence is that of MEMO1 family protein Nmar_0215 from Nitrosopumilus maritimus (strain SCM1).